A 312-amino-acid polypeptide reads, in one-letter code: Small ribosomal subunit protein uS2 (312 aa).

Belongs to the universal ribosomal protein uS2 family.

The chain is Small ribosomal subunit protein uS2 from Ruthia magnifica subsp. Calyptogena magnifica.